The sequence spans 297 residues: MTDIAATAEMQAALLSRALPYMQRYEHKTVVVKYGGHAMGDIELGKAFARDIALLKQSGVNPIVVHGGGPQIGAMLTKMGIESKFEGGLRVTDQKTVEIVEMVLAGSINKEIVALINAEGEWAIGLCGKDGNMVFAEKARKTMIDPDSNIERVLDLGFVGEPVEVDRTLLDLLARSEMIPVLAPVAPGRDGHTYNINADTFAGAIAGACKASRLLFLTDVPGVLDKNKKLIDELTVAEAKALIKDGTVSGGMIPKVETCIEAIERGVEGVVILNGKTPHAVLLELFTEHGAGTLIVP.

Substrate contacts are provided by residues 68–69 (GG), arginine 90, and asparagine 195.

This sequence belongs to the acetylglutamate kinase family. ArgB subfamily.

The protein resides in the cytoplasm. It catalyses the reaction N-acetyl-L-glutamate + ATP = N-acetyl-L-glutamyl 5-phosphate + ADP. The protein operates within amino-acid biosynthesis; L-arginine biosynthesis; N(2)-acetyl-L-ornithine from L-glutamate: step 2/4. In terms of biological role, catalyzes the ATP-dependent phosphorylation of N-acetyl-L-glutamate. This Mesorhizobium japonicum (strain LMG 29417 / CECT 9101 / MAFF 303099) (Mesorhizobium loti (strain MAFF 303099)) protein is Acetylglutamate kinase.